Here is a 359-residue protein sequence, read N- to C-terminus: Apelin receptor B (359 aa).

At 1 to 36 (MNAMDNMTADYSPDYFDDAVNSSMCEYDEWEPSYSL) the chain is on the extracellular side. Asn6 and Asn21 each carry an N-linked (GlcNAc...) asparagine glycan. Intrachain disulfides connect Cys25/Cys288 and Cys107/Cys186. Residues 37 to 57 (IPVLYMLIFILGLTGNGVVIF) form a helical membrane-spanning segment. Residues 58–75 (TVWRAQSKRRAADVYIGN) are Cytoplasmic-facing. A helical transmembrane segment spans residues 76–96 (LALADLTFVVTLPLWAVYTAL). The Extracellular segment spans residues 97–108 (GYHWPFGVALCK). A helical transmembrane segment spans residues 109–129 (ISSYVVLLNMYASVFCLTCLS). At 130-151 (LDRYMAIVHSLTSTQLRTRGHM) the chain is on the cytoplasmic side. Residues 152–172 (RASLTAIWLLSGVLAAPTLLF) form a helical membrane-spanning segment. At 173 to 213 (RTTVYDVETNRTSCAMDFNLVVSQPGQETYWIAGLSISSTA) the chain is on the extracellular side. Asn182 is a glycosylation site (N-linked (GlcNAc...) asparagine). Residues 214–234 (LGFLIPLLAMMVCYGFIGCTV) form a helical membrane-spanning segment. Topologically, residues 235–251 (TRHFNSLRKEDQRKRRL) are cytoplasmic. Residues 252 to 272 (LKIITTLVVVFAACWMPFHVV) form a helical membrane-spanning segment. Over 273–286 (KTMDALSYLNLAPD) the chain is Extracellular. A helical membrane pass occupies residues 287–307 (SCTFLNLLLLAHPYATCLAYV). Residues 308–359 (NSCLNPLLYAFFDLRFRSQCLCLLNLKKALHASPASSLSSQKTEAQSLATKV) are Cytoplasmic-facing.

It belongs to the G-protein coupled receptor 1 family. In terms of tissue distribution, mesendodermal expression at the blastoderm margin appears by 4.5 hpf. At early gastrulation, expression is maintained ventrolaterally while expression in dorsal cells and random deep cells declines. During gastrulation and segmentation, expression is maintained in adaxial, intermediate, and lateral plate mesoderm. During late segmentation, expressed in several regions including the forming heart. By 24 hpf, expressed in the dorsal aorta, caudal vein, and intersomitic blood vessels.

The protein resides in the cell membrane. G protein-coupled receptor for peptide hormones apelin (apln) and apelin receptor early endogenous ligand (apela), that plays a role in the regulation of normal cardiovascular function and fluid homeostasis. When acting as apelin receptor, activates both G(i) protein pathway that inhibits adenylate cyclase activity, and the beta-arrestin pathway that promotes internalization of the receptor. Also functions as mechanoreceptor that is activated by pathological stimuli in a G-protein-independent fashion to induce beta-arrestin signaling, hence eliciting cardiac hypertrophy. However, the presence of apelin ligand blunts cardiac hypertrophic induction from APLNR/APJ on response to pathological stimuli. Plays a key role in early development such as gastrulation, blood vessels formation and heart morphogenesis by acting as a receptor for apela hormone, promoting endoderm and mesendoderm cell migration and regulating the migration of cells fated to become myocardial progenitors, respectively. Positively regulates angioblast migration toward the embryonic midline, i.e. the position of the future vessel formation, during vasculogenesis. May promote sinus venosus (SV)-derived endothelial cells migration into the developing heart to promote coronary blood vessel development. Required for cardiovascular development, particularly for intersomitic vein angiogenesis by acting as a receptor for apln hormone. Plays a role in various processes in adults such as regulation of blood vessel formation, blood pressure, heart contractility and heart failure. Acts redundantly with agtrl1a in heart development. Its function is as follows. G protein-coupled receptor for peptide hormones apelin (APLN) and apelin receptor early endogenous ligand (APELA/ELA), that plays a role in the regulation of normal cardiovascular function and fluid homeostasis. When acting as apelin receptor, activates both G(i) protein pathway that inhibits adenylate cyclase activity, and the beta-arrestin pathway that promotes internalization of the receptor. APLNR/APJ also functions as mechanoreceptor that is activated by pathological stimuli in a G-protein-independent fashion to induce beta-arrestin signaling, hence eliciting cardiac hypertrophy. Plays a key role in early development such as gastrulation, blood vessels formation and heart morphogenesis by acting as a APELA receptor. May promote angioblast migration toward the embryonic midline, i.e. the position of the future vessel formation, during vasculogenesis. Promotes sinus venosus (SV)-derived endothelial cells migration into the developing heart to promote coronary blood vessel development. Also plays a role in various processes in adults such as regulation of blood vessel formation, blood pressure, heart contractility and heart failure. The polypeptide is Apelin receptor B (aplnrb) (Danio rerio (Zebrafish)).